The chain runs to 851 residues: Transcriptional regulator RFX1 (851 aa).

2 stretches are compositionally biased toward polar residues: residues 1-11 (MSSDQTPQNRN) and 20-34 (PRLQ…STGP). Disordered regions lie at residues 1–121 (MSSD…EPHP), 134–170 (QSQF…PQTY), and 195–230 (HEAS…TGEN). Residues 38 to 53 (QQRERSQEQESDHEHQ) are compositionally biased toward basic and acidic residues. A compositionally biased stretch (low complexity) spans 54-84 (QAQQHLHQFQQSNLTPSTTAFPSSTSIPTFS). Over residues 85-114 (KQDQGYHNQFSSPQSSYRKIGNFAQSSNAP) the composition is skewed to polar residues. Positions 141–170 (YSSPYIGQSQSQSQSQSQAQPQPHPQPQTY) are enriched in low complexity. Polar residues predominate over residues 199–211 (SADNDSATNITTP). A DNA-binding region (RFX-type winged-helix) is located at residues 282–357 (GMVWLLNSCD…YHYCGIKLTG (76 aa)). Disordered stretches follow at residues 368–411 (YQQK…SVSY) and 783–806 (PPSL…TGTQ). The span at 384 to 393 (AQVGSSTSSA) shows a compositional bias: polar residues. The segment covering 783 to 797 (PPSLSSLPQTQQQNP) has biased composition (low complexity).

It belongs to the RFX family.

Its subcellular location is the nucleus. In terms of biological role, transcription factor involved in DNA damage responses, morphogenesis, and virulence. In Candida albicans (strain SC5314 / ATCC MYA-2876) (Yeast), this protein is Transcriptional regulator RFX1 (RFX1).